The following is a 2446-amino-acid chain: MDTGDTALGQKATSRSGETDKASGRWRQEQSAVIKMSTFGSHEGQRQPQIEPEQIGNTASAQLFGSGKLASPSEVVQQVAEKQYPPHRPSPYSCQHSLSFPQHSLPQGVMHSTKPHQSLEGPPWLFPGPLPSVASEDLFPFPIHGHSGGYPRKKISSLNPAYSQYSQKSIEQAEEAHKKEHKPKKPGKYICPYCSRACAKPSVLKKHIRSHTGERPYPCIPCGFSFKTKSNLYKHRKSHAHAIKAGLVPFTESAVSKLDLEAGFIDVEAEIHSDGEQSTDTDEESSLFAEASDKMSPGPPIPLDIASRGGYHGSLEESLGGPMKVPILIIPKSGIPLPNESSQYIGPDMLPNPSLNTKADDSHTVKQKLALRLSEKKGQDSEPSLNLLSPHSKGSTDSGYFSRSESAEQQISPPNTNAKSYEEIIFGKYCRLSPRNALSVTTTSQERAAMGRKGIMEPLPHVNTRLDVKMFEDPVSQLIPSKGDVDPSQTSMLKSTKFNSESRQPQIIPSSIRNEGKLYPANFQGSNPVLLEAPVDSSPLIRSNSVPTSSATNLTIPPSLRGSHSFDERMTGSDDVFYPGTVGIPPQRMLRRQAAFELPSVQEGHVEVEHHGRMLKGISSSSLKEKKLSPGDRVGYDYDVCRKPYKKWEDSETPKQNYRDISCLSSLKHGGEYFMDPVVPLQGVPSMFGTTCENRKRRKEKSVGDEEDTPMICSSIVSTPVGIMASDYDPKLQMQEGVRSGFAMAGHENLSHGHTERFDPCRPQLQPGSPSLVSEESPSAIDSDKMSDLGGRKPPGNVISVIQHTNSLSRPNSFERSESAELVACTQDKAPSPSETCDSEISEAPVSPEWAPPGDGAESGGKPSPSQQVQQQSYHTQPRLVRQHNIQVPEIRVTEEPDKPEKEKEAQSKEPEKPVEEFQWPQRSETLSQLPAEKLPPKKKRLRLADMEHSSGESSFESTGTGLSRSPSQESNLSHSSSFSMSFEREETSKLSALPKQDEFGKHSEFLTVPAGSYSLSVPGHHHQKEMRRCSSEQMPCPHPAEVPEVRSKSFDYGNLSHAPVSGAAASTVSPSRERKKCFLVRQASFSGSPEISQGEVGMDQSVKQEQLEHLHAGLRSGWHHGPPAVLPPLQQEDPGKQVAGPCPPLSSGPLHLAQPQIMHMDSQESLRNPLIQPTSYMTSKHLPEQPHLFPHQETIPFSPIQNALFQFQYPTVCMVHLPAQQPPWWQAHFPHPFAQHPQKSYGKPSFQTEIHSSYPLEHVAEHTGKKPAEYAHTKEQTYPCYSGASGLHPKNLLPKFPSDQSSKSTETPSEQVLQEDFASANAGSLQSLPGTVVPVRIQTHVPSYGSVMYTSISQILGQNSPAIVICKVDENMTQRTLVTNAAMQGIGFNIAQVLGQHAGLEKYPIWKAPQTLPLGLESSIPLCLPSTSDSVATLGGSKRMLSPASSLELFMETKQQKRVKEEKMYGQIVEELSAVELTNSDIKKDLSRPQKPQLVRQGCASEPKDGLQSGSSSFSSLSPSSSQDYPSVSPSSREPFLPSKEMLSGSRAPLPGQKSSGPSESKESSDELDIDETASDMSMSPQSSSLPAGDGQLEEEGKGHKRPVGMLVRMASAPSGNVADSTLLLTDMADFQQILQFPSLRTTTTVSWCFLNYTKPNYVQQATFKSSVYASWCISSCNPNPSGLNTKTTLALLRSKQKITAEIYTLAAMHRPGTGKLTSSSAWKQFTQMKPDASFLFGSKLERKLVGNILKERGKGDIHGDKDIGSKQTEPIRIKIFEGGYKSNEDYVYVRGRGRGKYICEECGIRCKKPSMLKKHIRTHTDVRPYVCKLCNFAFKTKGNLTKHMKSKAHMKKCLELGVSMTSVDDTETEEAENLEDLHKAAEKHSMSSISTDHQFSDAEESDGEDGDDNDDDDEDEDDFDDQGDLTPKTRSRSTSPQPPRFSSLPVNVGAVPHGVPSDSSLGHSSLISYLVTLPSIRVTQLMTPSDSCEDTQMTEYQRLFQSKSTDSEPDKDRLDIPSCMDEECMLPSEPSSSPRDFSPSSHHSSPGYDSSPCRDNSPKRYLIPKGDLSPRRHLSPRRDLSPMRHLSPRKEAALRREMSQRDVSPRRHLSPRRPVSPGKDITARRDLSPRRERRYMTTIRAPSPRRALYHNPPLSMGQYLQAEPIVLGPPNLRRGLPQVPYFSLYGDQEGAYEHPGSSLFPEGPNDYVFSHLPLHSQQQVRAPIPMVPVGGIQMVHSMPPALSSLHPSPTLPLPMEGFEEKKGASGESFSKDPYVLSKQHEKRGPHALQSSGPPSTPSSPRLLMKQSTSEDSLNATEREQEENIQTCTKAIASLRIATEEAALLGPDQPARVQEPHQNPLGSAHVSIRHFSRPEPGQPCTSATHPDLHDGEKDNFGTSQTPLAHSTFYSKSCVDDKQLDFHSSKELSSSTEESKDPSSEKSQLH.

Residues 1–93 (MDTGDTALGQ…YPPHRPSPYS (93 aa)) form a disordered region. Positions 17-28 (GETDKASGRWRQ) are enriched in basic and acidic residues. 2 consecutive C2H2-type zinc fingers follow at residues 189–211 (YICPYCSRACAKPSVLKKHIRSH) and 217–239 (YPCIPCGFSFKTKSNLYKHRKSH). Disordered stretches follow at residues 272 to 303 (HSDGEQSTDTDEESSLFAEASDKMSPGPPIPL), 340 to 416 (ESSQ…PPNT), 543 to 563 (SNSVPTSSATNLTIPPSLRGS), and 751 to 985 (SHGH…SFER). Polar residues-rich tracts occupy residues 381-416 (SEPSLNLLSPHSKGSTDSGYFSRSESAEQQISPPNT) and 543-556 (SNSVPTSSATNLTI). A compositionally biased stretch (basic and acidic residues) spans 751-760 (SHGHTERFDP). The segment covering 766 to 777 (QPGSPSLVSEES) has biased composition (polar residues). Positions 782-791 (DSDKMSDLGG) are enriched in basic and acidic residues. Over residues 800 to 812 (SVIQHTNSLSRPN) the composition is skewed to polar residues. The residue at position 819 (Ser-819) is a Phosphoserine. Low complexity predominate over residues 863–878 (PSPSQQVQQQSYHTQP). A compositionally biased stretch (basic and acidic residues) spans 892–916 (RVTEEPDKPEKEKEAQSKEPEKPVE). A Nuclear localization signal motif is present at residues 937-943 (PKKKRLR). Phosphoserine occurs at positions 950, 955, 1048, 1443, and 1447. The span at 952–982 (GESSFESTGTGLSRSPSQESNLSHSSSFSMS) shows a compositional bias: low complexity. Residues 1485–1603 (KDLSRPQKPQ…LEEEGKGHKR (119 aa)) are disordered. Low complexity-rich tracts occupy residues 1510 to 1533 (SGSSSFSSLSPSSSQDYPSVSPSS) and 1576 to 1586 (SDMSMSPQSSS). C2H2-type zinc fingers lie at residues 1799 to 1821 (YICEECGIRCKKPSMLKKHIRTH) and 1827 to 1851 (YVCKLCNFAFKTKGNLTKHMKSKAH). 2 disordered regions span residues 1882 to 1951 (AAEK…VNVG) and 2024 to 2129 (EECM…RRDL). Acidic residues predominate over residues 1899 to 1925 (DAEESDGEDGDDNDDDDEDEDDFDDQG). Low complexity predominate over residues 2029–2053 (PSEPSSSPRDFSPSSHHSSPGYDSS). Repeat copies occupy residues 2053–2056 (SPCR), 2059–2062 (SPKR), 2071–2074 (SPRR), 2083–2086 (SPMR), 2089–2092 (SPRK), 2106–2109 (SPRR), 2112–2115 (SPRR), 2118–2121 (SPGK), 2130–2133 (SPRR), and 2145–2148 (SPRR). The 10 X 4 AA tandem repeats of S-P-[RGMKC]-[RK] stretch occupies residues 2053–2148 (SPCRDNSPKR…TTIRAPSPRR (96 aa)). Residues 2078-2107 (PRRDLSPMRHLSPRKEAALRREMSQRDVSP) show a composition bias toward basic and acidic residues. Residue Ser-2118 is modified to Phosphoserine. Disordered stretches follow at residues 2242 to 2325 (PALS…QEEN), 2371 to 2403 (HFSRPEPGQPCTSATHPDLHDGEKDNFGTSQTP), and 2423 to 2446 (HSSKELSSSTEESKDPSSEKSQLH). 2 positions are modified to phosphoserine: Ser-2297 and Ser-2301. Polar residues predominate over residues 2307-2317 (KQSTSEDSLNA). Over residues 2387–2396 (PDLHDGEKDN) the composition is skewed to basic and acidic residues. Phosphoserine occurs at positions 2429 and 2431. The segment covering 2433-2446 (EESKDPSSEKSQLH) has biased composition (basic and acidic residues).

As to quaternary structure, interacts with TCF4. As to expression, expressed in brain and skeletal muscle.

Its subcellular location is the nucleus. Its function is as follows. This protein specifically binds to the DNA sequence 5'-GGGACTTTCC-3' which is found in the enhancer elements of numerous viral promoters such as those of SV40, CMV, or HIV1. In addition, related sequences are found in the enhancer elements of a number of cellular promoters, including those of the class I MHC, interleukin-2 receptor, somatostatin receptor II, and interferon-beta genes. It may act in T-cell activation. This is Transcription factor HIVEP2 (HIVEP2) from Homo sapiens (Human).